Reading from the N-terminus, the 1479-residue chain is ABC transporter ecdL (1479 aa).

The next 3 membrane-spanning stretches (helical) occupy residues 32–52 (LLFE…SVAL), 82–102 (LSNA…WLSF), and 142–162 (IASI…VEAM). 2 N-linked (GlcNAc...) asparagine glycosylation sites follow: Asn183 and Asn234. The next 2 helical transmembrane spans lie at 251–271 (WGGF…PFLV) and 291–311 (SGLI…TAAF). Residues 258–535 (LCLIGVNYAQ…FVESLMGLRQ (278 aa)) form the ABC transmembrane type-1 1 domain. Asn345 carries N-linked (GlcNAc...) asparagine glycosylation. Helical transmembrane passes span 365-382 (LHET…LWLL) and 391-411 (VAAA…SGLL). Asn427 carries an N-linked (GlcNAc...) asparagine glycan. 2 helical membrane-spanning segments follow: residues 469-489 (LLVA…TFAF) and 503-523 (PLLA…GQAV). Residues 607–835 (IVLQNHTASW…GSSLRLEELV (229 aa)) form the ABC transporter 1 domain. Asn611 and Asn628 each carry an N-linked (GlcNAc...) asparagine glycan. 641–648 (GPIGSGKS) is a binding site for ATP. Asn793 and Asn797 each carry an N-linked (GlcNAc...) asparagine glycan. Transmembrane regions (helical) follow at residues 885–905 (TIGW…VVAL), 955–975 (LFAV…LHLM), 1028–1048 (ALIG…VIVY), 1052–1072 (YLAA…MFYL), and 1135–1155 (IWLT…LVSI). The region spanning 932-1193 (IWLKFWTEAN…LVYNWTALEN (262 aa)) is the ABC transmembrane type-1 2 domain. An N-linked (GlcNAc...) asparagine glycan is attached at Asn1161. Residues 1165 to 1185 (ASIGLALVNLIAFGANMKGLV) traverse the membrane as a helical segment. Asn1187 carries an N-linked (GlcNAc...) asparagine glycan. The region spanning 1230–1461 (IKFKSVTASY…RSIFASLLRS (232 aa)) is the ABC transporter 2 domain. 1264 to 1271 (GRTGCGKS) contacts ATP. The disordered stretch occupies residues 1460–1479 (RSGDEEPGNGHKHESEGEEE). Over residues 1461–1479 (SGDEEPGNGHKHESEGEEE) the composition is skewed to basic and acidic residues.

It belongs to the ABC transporter superfamily. ABCC family. Conjugate transporter (TC 3.A.1.208) subfamily.

The protein resides in the cell membrane. In terms of biological role, ABC transporter; part of the gene cluster that mediates the biosynthesis of echinocandin B, a fungal lipidated cyclic hexapeptide that acts as an antifungal agent. The protein is ABC transporter ecdL of Aspergillus rugulosus (Emericella rugulosa).